The primary structure comprises 391 residues: uncharacterized protein (391 aa).

WD repeat units lie at residues 137–179 (VNDI…PILA) and 182–222 (PLSS…SAEE).

It is found in the cytoplasm. The protein localises to the nucleus. This is an uncharacterized protein from Schizosaccharomyces pombe (strain 972 / ATCC 24843) (Fission yeast).